A 485-amino-acid polypeptide reads, in one-letter code: Aspartyl/glutamyl-tRNA(Asn/Gln) amidotransferase subunit B (485 aa).

Belongs to the GatB/GatE family. GatB subfamily. In terms of assembly, heterotrimer of A, B and C subunits.

The catalysed reaction is L-glutamyl-tRNA(Gln) + L-glutamine + ATP + H2O = L-glutaminyl-tRNA(Gln) + L-glutamate + ADP + phosphate + H(+). It carries out the reaction L-aspartyl-tRNA(Asn) + L-glutamine + ATP + H2O = L-asparaginyl-tRNA(Asn) + L-glutamate + ADP + phosphate + 2 H(+). Its function is as follows. Allows the formation of correctly charged Asn-tRNA(Asn) or Gln-tRNA(Gln) through the transamidation of misacylated Asp-tRNA(Asn) or Glu-tRNA(Gln) in organisms which lack either or both of asparaginyl-tRNA or glutaminyl-tRNA synthetases. The reaction takes place in the presence of glutamine and ATP through an activated phospho-Asp-tRNA(Asn) or phospho-Glu-tRNA(Gln). This chain is Aspartyl/glutamyl-tRNA(Asn/Gln) amidotransferase subunit B, found in Cupriavidus pinatubonensis (strain JMP 134 / LMG 1197) (Cupriavidus necator (strain JMP 134)).